Reading from the N-terminus, the 542-residue chain is Putative selenium-binding protein (542 aa).

Belongs to the selenium-binding protein family.

This Caenorhabditis elegans protein is Putative selenium-binding protein.